Consider the following 206-residue polypeptide: Small ribosomal subunit protein uS4 (206 aa).

An S4 RNA-binding domain is found at 96–156; sequence CRLDNVVYRM…EKSSNQLRIV (61 aa).

The protein belongs to the universal ribosomal protein uS4 family. As to quaternary structure, part of the 30S ribosomal subunit. Contacts protein S5. The interaction surface between S4 and S5 is involved in control of translational fidelity.

Its function is as follows. One of the primary rRNA binding proteins, it binds directly to 16S rRNA where it nucleates assembly of the body of the 30S subunit. With S5 and S12 plays an important role in translational accuracy. This is Small ribosomal subunit protein uS4 from Pseudomonas putida (strain W619).